An 89-amino-acid polypeptide reads, in one-letter code: Small ribosomal subunit protein uS14A (89 aa).

Belongs to the universal ribosomal protein uS14 family. Part of the 30S ribosomal subunit. Contacts proteins S3 and S10.

Binds 16S rRNA, required for the assembly of 30S particles and may also be responsible for determining the conformation of the 16S rRNA at the A site. This is Small ribosomal subunit protein uS14A from Staphylococcus epidermidis (strain ATCC 35984 / DSM 28319 / BCRC 17069 / CCUG 31568 / BM 3577 / RP62A).